A 657-amino-acid polypeptide reads, in one-letter code: Probable cytochrome P450 556A1 (657 aa).

A helical transmembrane segment spans residues 2-24; it reads FLTSILYTIIIILIFYKGLEYLI. The tract at residues 440 to 486 is disordered; that stretch reads RSLPSINNNNNNNNNNNNNNNNNNNNNNNNNSNNNSINGNNKNNNRN. Low complexity predominate over residues 446-486; it reads NNNNNNNNNNNNNNNNNNNNNNNNNSNNNSINGNNKNNNRN. Cys-587 contacts heme.

It belongs to the cytochrome P450 family. Heme is required as a cofactor.

The protein localises to the membrane. This chain is Probable cytochrome P450 556A1 (cyp556A1), found in Dictyostelium discoideum (Social amoeba).